Reading from the N-terminus, the 290-residue chain is 4-hydroxybenzoate octaprenyltransferase (290 aa).

The next 8 helical transmembrane spans lie at 24-44 (IGFF…HKGI), 48-68 (VVLI…CIIN), 98-118 (LVAL…LNFI), 142-162 (FPQV…FTAI), 171-191 (WLLF…YAMI), 214-234 (FLIG…GWKE), 239-259 (VFYF…QILI), and 270-290 (AFLS…SSFH).

The protein belongs to the UbiA prenyltransferase family. Requires Mg(2+) as cofactor.

It is found in the cell inner membrane. The enzyme catalyses all-trans-octaprenyl diphosphate + 4-hydroxybenzoate = 4-hydroxy-3-(all-trans-octaprenyl)benzoate + diphosphate. It functions in the pathway cofactor biosynthesis; ubiquinone biosynthesis. Catalyzes the prenylation of para-hydroxybenzoate (PHB) with an all-trans polyprenyl group. Mediates the second step in the final reaction sequence of ubiquinone-8 (UQ-8) biosynthesis, which is the condensation of the polyisoprenoid side chain with PHB, generating the first membrane-bound Q intermediate 3-octaprenyl-4-hydroxybenzoate. The protein is 4-hydroxybenzoate octaprenyltransferase of Blochmanniella pennsylvanica (strain BPEN).